We begin with the raw amino-acid sequence, 117 residues long: Large ribosomal subunit protein bL20 (117 aa).

Belongs to the bacterial ribosomal protein bL20 family.

Binds directly to 23S ribosomal RNA and is necessary for the in vitro assembly process of the 50S ribosomal subunit. It is not involved in the protein synthesizing functions of that subunit. The chain is Large ribosomal subunit protein bL20 from Campylobacter fetus subsp. fetus (strain 82-40).